The primary structure comprises 298 residues: Tyrosine recombinase XerC (298 aa).

The Core-binding (CB) domain occupies 2-88; that stretch reads TDLHTDVERY…ALRSFFDWLV (87 aa). Residues 109-288 enclose the Tyr recombinase domain; that stretch reads HLPKNIDVDD…DFQHLASVYD (180 aa). Catalysis depends on residues Arg-148, Lys-172, His-240, Arg-243, and His-266. Tyr-275 serves as the catalytic O-(3'-phospho-DNA)-tyrosine intermediate.

The protein belongs to the 'phage' integrase family. XerC subfamily. As to quaternary structure, forms a cyclic heterotetrameric complex composed of two molecules of XerC and two molecules of XerD, in which XerC interacts with XerD via its C-terminal region, XerD interacts with XerC via its C-terminal region and so on.

The protein localises to the cytoplasm. With respect to regulation, ftsK may regulate the catalytic switch between XerC and XerD in the heterotetrameric complex during the two steps of the recombination process. Site-specific tyrosine recombinase, which acts by catalyzing the cutting and rejoining of the recombining DNA molecules. Binds cooperatively to specific DNA consensus sequences that are separated from XerD binding sites by a short central region, forming the heterotetrameric XerC-XerD complex that recombines DNA substrates. The complex is essential to convert dimers of the bacterial chromosome into monomers to permit their segregation at cell division. It also contributes to the segregational stability of plasmids. In the complex XerC specifically exchanges the top DNA strands. The polypeptide is Tyrosine recombinase XerC (Escherichia coli O157:H7).